The following is a 354-amino-acid chain: Tetraacyldisaccharide 4'-kinase (354 aa).

ATP is bound at residue 53–60; sequence AWGGTGKT.

Belongs to the LpxK family.

It catalyses the reaction a lipid A disaccharide + ATP = a lipid IVA + ADP + H(+). It functions in the pathway glycolipid biosynthesis; lipid IV(A) biosynthesis; lipid IV(A) from (3R)-3-hydroxytetradecanoyl-[acyl-carrier-protein] and UDP-N-acetyl-alpha-D-glucosamine: step 6/6. Transfers the gamma-phosphate of ATP to the 4'-position of a tetraacyldisaccharide 1-phosphate intermediate (termed DS-1-P) to form tetraacyldisaccharide 1,4'-bis-phosphate (lipid IVA). The chain is Tetraacyldisaccharide 4'-kinase from Nitratidesulfovibrio vulgaris (strain ATCC 29579 / DSM 644 / CCUG 34227 / NCIMB 8303 / VKM B-1760 / Hildenborough) (Desulfovibrio vulgaris).